Here is a 94-residue protein sequence, read N- to C-terminus: DNA gyrase subunit A (94 aa).

One can recognise a Topo IIA-type catalytic domain in the interval 35 to 94; the sequence is LPDVRDGLKPVHRRILYGLNEQGMTPDKPYKKSARIVGDVMGKYHPHGDSSIYEAMVRMA.

This sequence belongs to the type II topoisomerase GyrA/ParC subunit family. As to quaternary structure, heterotetramer, composed of two GyrA and two GyrB chains. In the heterotetramer, GyrA contains the active site tyrosine that forms a transient covalent intermediate with DNA, while GyrB binds cofactors and catalyzes ATP hydrolysis.

It is found in the cytoplasm. The catalysed reaction is ATP-dependent breakage, passage and rejoining of double-stranded DNA.. Its function is as follows. A type II topoisomerase that negatively supercoils closed circular double-stranded (ds) DNA in an ATP-dependent manner to modulate DNA topology and maintain chromosomes in an underwound state. Negative supercoiling favors strand separation, and DNA replication, transcription, recombination and repair, all of which involve strand separation. Also able to catalyze the interconversion of other topological isomers of dsDNA rings, including catenanes and knotted rings. Type II topoisomerases break and join 2 DNA strands simultaneously in an ATP-dependent manner. This Staphylococcus epidermidis protein is DNA gyrase subunit A.